Reading from the N-terminus, the 264-residue chain is MKGKSALTLLLAGIFSCGTCQATGAEVTSESVFNILNSTGAATDKSYLSLNPDKYPNYRLLIHSAKLQNEIKSHYTKDEIQGLLTLTENTRKLTLTEKPWGTFILASTFEDDKTAAETHYDAVWLRDSLWGYMALVSDQGNSVAAKKVLLTLWDYMSTPDQIKRMQDVISNPKRLDGIPVQMNAVHIRFDSNSPVMADVQEEGKPQLWNHKQNDALGLYLDLLIQAINTGTINAEDWQKGDRLKSVALLIAYLDKANFYVMEDS.

A signal peptide spans methionine 1 to serine 16. Cysteine 17 carries N-palmitoyl cysteine lipidation. Cysteine 17 carries S-diacylglycerol cysteine lipidation.

The protein localises to the cell inner membrane. This is an uncharacterized protein from Escherichia coli (strain K12).